The following is a 610-amino-acid chain: ABC transporter ATP-binding protein/permease wht-3 (610 aa).

One can recognise an ABC transporter domain in the interval 42 to 277; the sequence is VKTRKKLFSK…FADCGHPIPK (236 aa). Residue 74–81 coordinates ATP; sequence GASGAGKT. The next 5 membrane-spanning stretches (helical) occupy residues 396-416, 446-466, 477-497, 503-523, and 584-604; these read ALYF…MTFM, LPLF…MIGL, ILIS…LACL, LAIA…GLYG, and VIGL…ALFI.

This sequence belongs to the ABC transporter superfamily. ABCG family. Eye pigment precursor importer (TC 3.A.1.204) subfamily.

The protein resides in the membrane. Required for efficient RNA interference (RNAi) of pop-1 indicating a role in the germline development. This chain is ABC transporter ATP-binding protein/permease wht-3 (wht-3), found in Caenorhabditis elegans.